The sequence spans 643 residues: Mitochondrial Rho GTPase 2 (643 aa).

The Cytoplasmic segment spans residues 1–611 (MMLGGKSSAG…SGRRSRNIRQ (611 aa)). A Miro 1 domain is found at 12-179 (RTSLRVAVAG…FYFASKAVLH (168 aa)). EF-hand domains lie at 195–230 (RLRR…CFGA) and 315–350 (EAMD…APDS). The Ca(2+) site is built by D208, D210, D212, E219, D328, D330, D332, and E339. One can recognise a Miro 2 domain in the interval 423-592 (RNVFQCFVFG…FSRIVSTAEN (170 aa)). Residues 612–632 (LVNSSLLFVSVGTAVGFAGLA) traverse the membrane as a helical segment. Residues 633 to 643 (AYRAYSARKNA) lie on the Mitochondrial intermembrane side of the membrane.

It belongs to the mitochondrial Rho GTPase family. As to expression, expressed roots, rosette and cauline leaves, stems, flowers and siliques.

Its subcellular location is the mitochondrion outer membrane. Activated by calcium. Calcium-binding mitochondrial GTPase involved in calcium signaling during salt stress response. May play a role in the progression of embryonic cell division, development of haploid male and female gametes, and pollen tube growth. This is Mitochondrial Rho GTPase 2 from Arabidopsis thaliana (Mouse-ear cress).